We begin with the raw amino-acid sequence, 399 residues long: Tyrosine--tRNA ligase 2 (399 aa).

The short motif at 42 to 51 (PTAPDLHLGH) is the 'HIGH' region element. The short motif at 226–230 (KMSKS) is the 'KMSKS' region element. ATP is bound at residue Lys-229. Residues 336–396 (MPVASVLNKA…GKKAFARITL (61 aa)) form the S4 RNA-binding domain.

Belongs to the class-I aminoacyl-tRNA synthetase family. TyrS type 2 subfamily. In terms of assembly, homodimer.

The protein localises to the cytoplasm. The catalysed reaction is tRNA(Tyr) + L-tyrosine + ATP = L-tyrosyl-tRNA(Tyr) + AMP + diphosphate + H(+). Catalyzes the attachment of tyrosine to tRNA(Tyr) in a two-step reaction: tyrosine is first activated by ATP to form Tyr-AMP and then transferred to the acceptor end of tRNA(Tyr). The polypeptide is Tyrosine--tRNA ligase 2 (Pseudomonas aeruginosa (strain ATCC 15692 / DSM 22644 / CIP 104116 / JCM 14847 / LMG 12228 / 1C / PRS 101 / PAO1)).